We begin with the raw amino-acid sequence, 122 residues long: Small ribosomal subunit protein bS6 (122 aa).

It belongs to the bacterial ribosomal protein bS6 family.

In terms of biological role, binds together with bS18 to 16S ribosomal RNA. This Neisseria meningitidis serogroup B (strain ATCC BAA-335 / MC58) protein is Small ribosomal subunit protein bS6 (rpsF).